The chain runs to 110 residues: Endoribonuclease SymE (110 aa).

The 46-residue stretch at 29-74 folds into the SpoVT-AbrB domain; the sequence is SRYPDYTRIPALTMKGQWLEAAGFATGTEVDVRVMNGCIVLTAQQP.

The protein belongs to the SymE family.

It localises to the cytoplasm. Involved in the degradation and recycling of damaged RNA. It is itself a target for degradation by the ATP-dependent protease Lon. The polypeptide is Endoribonuclease SymE (Salmonella typhi).